The primary structure comprises 396 residues: Alanine racemase (396 aa).

Lys-46 functions as the Proton acceptor; specific for D-alanine in the catalytic mechanism. An N6-(pyridoxal phosphate)lysine modification is found at Lys-46. Residue Arg-145 coordinates substrate. The active-site Proton acceptor; specific for L-alanine is the Tyr-280. A substrate-binding site is contributed by Met-328.

This sequence belongs to the alanine racemase family. Pyridoxal 5'-phosphate is required as a cofactor.

It carries out the reaction L-alanine = D-alanine. The protein operates within amino-acid biosynthesis; D-alanine biosynthesis; D-alanine from L-alanine: step 1/1. Functionally, catalyzes the interconversion of L-alanine and D-alanine. May also act on other amino acids. The sequence is that of Alanine racemase (alr) from Brucella ovis (strain ATCC 25840 / 63/290 / NCTC 10512).